A 422-amino-acid chain; its full sequence is 26S proteasome non-ATPase regulatory subunit 11 (422 aa).

Ala2 is modified (N-acetylalanine). Phosphoserine occurs at positions 14 and 23. The PCI domain occupies 224 to 392; sequence DWKTAYSYFY…GVLIIFDEPP (169 aa). A Glycyl lysine isopeptide (Lys-Gly) (interchain with G-Cter in SUMO2) cross-link involves residue Lys274.

Belongs to the proteasome subunit S9 family. As to quaternary structure, component of the 19S proteasome regulatory particle complex. The 26S proteasome consists of a 20S core particle (CP) and two 19S regulatory subunits (RP). The regulatory particle is made of a lid composed of 9 subunits including PSMD11, a base containing 6 ATPases and few additional components.

In terms of biological role, component of the 26S proteasome, a multiprotein complex involved in the ATP-dependent degradation of ubiquitinated proteins. This complex plays a key role in the maintenance of protein homeostasis by removing misfolded or damaged proteins, which could impair cellular functions, and by removing proteins whose functions are no longer required. Therefore, the proteasome participates in numerous cellular processes, including cell cycle progression, apoptosis, or DNA damage repair. In the complex, PSMD11 is required for proteasome assembly. Plays a key role in increased proteasome activity in embryonic stem cells (ESCs): its high expression in ESCs promotes enhanced assembly of the 26S proteasome, followed by higher proteasome activity. This is 26S proteasome non-ATPase regulatory subunit 11 (Psmd11) from Mus musculus (Mouse).